The following is a 375-amino-acid chain: Succinyl-diaminopimelate desuccinylase (375 aa).

A Zn(2+)-binding site is contributed by His-66. The active site involves Asp-68. Asp-99 serves as a coordination point for Zn(2+). Glu-133 (proton acceptor) is an active-site residue. Zn(2+)-binding residues include Glu-134, Glu-162, and His-348.

This sequence belongs to the peptidase M20A family. DapE subfamily. Homodimer. Zn(2+) is required as a cofactor. It depends on Co(2+) as a cofactor.

The catalysed reaction is N-succinyl-(2S,6S)-2,6-diaminopimelate + H2O = (2S,6S)-2,6-diaminopimelate + succinate. It participates in amino-acid biosynthesis; L-lysine biosynthesis via DAP pathway; LL-2,6-diaminopimelate from (S)-tetrahydrodipicolinate (succinylase route): step 3/3. In terms of biological role, catalyzes the hydrolysis of N-succinyl-L,L-diaminopimelic acid (SDAP), forming succinate and LL-2,6-diaminopimelate (DAP), an intermediate involved in the bacterial biosynthesis of lysine and meso-diaminopimelic acid, an essential component of bacterial cell walls. The protein is Succinyl-diaminopimelate desuccinylase of Buchnera aphidicola subsp. Acyrthosiphon pisum (strain 5A).